The sequence spans 448 residues: MNQAQNSVGKSLDVQSFINQQPLSRYQWRVVLLCFLIVFLDGLDTAAMGFIAPALSQEWGIDRASLGPVMSAALIGMVFGALGSGPLADRFGRKGVLVGAVLVFGGFSLASAYATNVDQLLVLRFLTGLGLGAGMPNATTLLSEYTPERLKSLLVTSMFCGFNLGMAGGGFISAKMIPAYGWHSLLVIGGVLPLLLALVLMVWLPESARFLVVRNRGTDKIRKTLSPIAPQVVAEAGSFSVPEQKAVAARSVFAVIFSGTYGLGTMLLWLTYFMGLVIVYLLTSWLPTLMRDSGASMEQAAFIGALFQFGGVLSAVGVGWAMDRYNPHKVIGIFYLLAGVFAYAVGQSLGNITVLATLVLIAGMCVNGAQSAMPSLAARFYPTQGRATGVSWMLGIGRFGAILGAWSGATLLGLGWNFEQVLTALLVPAALATVGVIVKGLVSHADAT.

The Cytoplasmic segment spans residues 1-30 (MNQAQNSVGKSLDVQSFINQQPLSRYQWRV). A helical transmembrane segment spans residues 31–51 (VLLCFLIVFLDGLDTAAMGFI). Over 52 to 67 (APALSQEWGIDRASLG) the chain is Periplasmic. Residues 68–88 (PVMSAALIGMVFGALGSGPLA) traverse the membrane as a helical segment. The Cytoplasmic segment spans residues 89 to 94 (DRFGRK). The helical transmembrane segment at 95 to 115 (GVLVGAVLVFGGFSLASAYAT) threads the bilayer. The Periplasmic segment spans residues 116–119 (NVDQ). A helical transmembrane segment spans residues 120–140 (LLVLRFLTGLGLGAGMPNATT). Over 141–152 (LLSEYTPERLKS) the chain is Cytoplasmic. Residues 153-173 (LLVTSMFCGFNLGMAGGGFIS) traverse the membrane as a helical segment. The Periplasmic portion of the chain corresponds to 174 to 184 (AKMIPAYGWHS). Residues 185–205 (LLVIGGVLPLLLALVLMVWLP) form a helical membrane-spanning segment. The Cytoplasmic portion of the chain corresponds to 206-261 (ESARFLVVRNRGTDKIRKTLSPIAPQVVAEAGSFSVPEQKAVAARSVFAVIFSGTY). The chain crosses the membrane as a helical span at residues 262–282 (GLGTMLLWLTYFMGLVIVYLL). Over 283 to 301 (TSWLPTLMRDSGASMEQAA) the chain is Periplasmic. A helical transmembrane segment spans residues 302 to 322 (FIGALFQFGGVLSAVGVGWAM). Over 323-329 (DRYNPHK) the chain is Cytoplasmic. Residues 330–350 (VIGIFYLLAGVFAYAVGQSLG) traverse the membrane as a helical segment. Position 351 (N351) is a topological domain, periplasmic. Residues 352-372 (ITVLATLVLIAGMCVNGAQSA) traverse the membrane as a helical segment. Topologically, residues 373-398 (MPSLAARFYPTQGRATGVSWMLGIGR) are cytoplasmic. Residues 399-419 (FGAILGAWSGATLLGLGWNFE) form a helical membrane-spanning segment. At 420–421 (QV) the chain is on the periplasmic side. A helical membrane pass occupies residues 422–442 (LTALLVPAALATVGVIVKGLV). Residues 443–448 (SHADAT) lie on the Cytoplasmic side of the membrane.

This sequence belongs to the major facilitator superfamily. Aromatic acid:H(+) symporter (AAHS) (TC 2.A.1.15) family.

Its subcellular location is the cell inner membrane. In terms of biological role, transports 4-hydroxybenzoate (4-HBA) and protocatechuate across the membrane. Driven by the proton motive force. Also functions as a chemoreceptor, which is required for chemotaxis to aromatic acids. The sequence is that of 4-hydroxybenzoate transporter PcaK (pcaK) from Pseudomonas putida (Arthrobacter siderocapsulatus).